The sequence spans 1173 residues: Pumilio homolog 2 (1173 aa).

5 disordered regions span residues 41–68 (VSSA…PLSG), 265–296 (VSKL…ASPT), 480–518 (QQAA…ESLA), 592–662 (LTGA…SLGF), and 730–759 (PISM…SSSL). Polar residues predominate over residues 287-296 (TPGSRQASPT). Positions 480-492 (QQAATQASQGQQQ) are enriched in low complexity. Polar residues predominate over residues 493-518 (VMRATSNQRPLTPNQAQQGQQPESLA). A compositionally biased stretch (low complexity) spans 606–622 (QQQQQQQQQQHQQQQQQ). Residues 623-633 (PNANLHSNSFY) show a composition bias toward polar residues. Over residues 634–657 (GNSTMSNNSQSSSLFSPGPGQPGS) the composition is skewed to low complexity. One can recognise a PUM-HD domain in the interval 815–1155 (GRSRLLEDFR…HILAKLEKYY (341 aa)). 9 Pumilio repeats span residues 835-870 (DLMG…LVFS), 871-906 (EILQ…ALAT), 907-942 (RIRG…EMVR), 943-978 (ELDG…FIIE), 979-1014 (AFKG…PILE), 1015-1050 (ELHQ…KIVC), 1051-1086 (EVRG…FLID), 1087-1129 (EICC…IIMH), and 1130-1167 (KIRP…LLVG). An adenine-nucleotide binding in RNA target region spans residues 850–854 (SRFIQ). A uracil-nucleotide binding in RNA target region spans residues 886–890 (NYVIQ). Residues 922–926 (CRVIQ) form an adenine-nucleotide binding in RNA target region. Residues 958–962 (NHVVQ) form a non-specific-nucleotide binding in RNA target region. The tract at residues 994 to 998 (CRVIQ) is adenine-nucleotide binding in RNA target. Positions 1030–1034 (NYVIQ) are uracil-nucleotide binding in RNA target. The interval 1066-1070 (SNVVE) is guanine-nucleotide binding in RNA target. The uracil-nucleotide binding in RNA target stretch occupies residues 1109–1113 (NYVVQ).

Component of a complex with papd4, sympk, tacc3, parn, dazl and cpeb1. In terms of processing, phosphorylated.

It localises to the cytoplasm. The protein localises to the P-body. The protein resides in the cytoplasmic granule. Functionally, sequence-specific RNA-binding protein that acts as a post-transcriptional repressor by binding the 3'-UTR of mRNA targets. Binds to an RNA consensus sequence, the Pumilio Response Element (PRE), 5'-UGUANAUA-3', that is related to the Nanos Response Element (NRE). Mediates post-transcriptional repression of transcripts via different mechanisms: acts via direct recruitment of deadenylase complexes leading to translational inhibition and mRNA degradation. Also mediates deadenylation-independent repression by promoting accessibility of miRNAs. The sequence is that of Pumilio homolog 2 (pum2) from Xenopus laevis (African clawed frog).